Here is a 138-residue protein sequence, read N- to C-terminus: Transcriptional activator protein Pur-alpha (138 aa).

At S70 the chain carries Phosphoserine.

Belongs to the PUR DNA-binding protein family. In terms of assembly, homodimer, heterodimer with PURB and heterotrimer with PURB and YBX1/Y-box protein 1. Interacts with FMR1; this interaction occurs in association with polyribosome.

The protein resides in the nucleus. Its function is as follows. This is a probable transcription activator that specifically binds the purine-rich single strand of the PUR element located upstream of the c-Myc gene. May play a role in the initiation of DNA replication and in recombination. In Rattus norvegicus (Rat), this protein is Transcriptional activator protein Pur-alpha.